We begin with the raw amino-acid sequence, 349 residues long: Dihydroorotate dehydrogenase (quinone) (349 aa).

Residues 67-71 (AGLDK) and threonine 91 each bind FMN. Position 71 (lysine 71) interacts with substrate. Position 116–120 (116–120 (NRLGF)) interacts with substrate. FMN-binding residues include asparagine 147 and asparagine 180. Substrate is bound at residue asparagine 180. Serine 183 functions as the Nucleophile in the catalytic mechanism. A substrate-binding site is contributed by asparagine 185. 2 residues coordinate FMN: lysine 225 and threonine 253. Position 254-255 (254-255 (NT)) interacts with substrate. FMN contacts are provided by residues glycine 276, glycine 305, and 326–327 (YT).

Belongs to the dihydroorotate dehydrogenase family. Type 2 subfamily. As to quaternary structure, monomer. FMN serves as cofactor.

Its subcellular location is the cell membrane. It carries out the reaction (S)-dihydroorotate + a quinone = orotate + a quinol. It participates in pyrimidine metabolism; UMP biosynthesis via de novo pathway; orotate from (S)-dihydroorotate (quinone route): step 1/1. Its function is as follows. Catalyzes the conversion of dihydroorotate to orotate with quinone as electron acceptor. The protein is Dihydroorotate dehydrogenase (quinone) of Bordetella pertussis (strain Tohama I / ATCC BAA-589 / NCTC 13251).